Here is a 188-residue protein sequence, read N- to C-terminus: Elongation factor P (188 aa).

At K34 the chain carries N6-(3,6-diaminohexanoyl)-5-hydroxylysine.

This sequence belongs to the elongation factor P family. Post-translationally, may be beta-lysylated on the epsilon-amino group of Lys-34 by the combined action of EpmA and EpmB, and then hydroxylated on the C5 position of the same residue by EpmC (if this protein is present). Lysylation is critical for the stimulatory effect of EF-P on peptide-bond formation. The lysylation moiety may extend toward the peptidyltransferase center and stabilize the terminal 3-CCA end of the tRNA. Hydroxylation of the C5 position on Lys-34 may allow additional potential stabilizing hydrogen-bond interactions with the P-tRNA.

The protein localises to the cytoplasm. The protein operates within protein biosynthesis; polypeptide chain elongation. Functionally, involved in peptide bond synthesis. Alleviates ribosome stalling that occurs when 3 or more consecutive Pro residues or the sequence PPG is present in a protein, possibly by augmenting the peptidyl transferase activity of the ribosome. Modification of Lys-34 is required for alleviation. In Vibrio cholerae serotype O1 (strain ATCC 39541 / Classical Ogawa 395 / O395), this protein is Elongation factor P.